Reading from the N-terminus, the 113-residue chain is Nucleoid-associated protein FMG_0513 (113 aa).

The segment at 1-44 (MGNKFRGGMPGMGNMGNMMKQMQKMQRQMEETQKRLEETEVTAT) is disordered. A compositionally biased stretch (low complexity) spans 15-26 (MGNMMKQMQKMQ). A compositionally biased stretch (basic and acidic residues) spans 27–38 (RQMEETQKRLEE).

It belongs to the YbaB/EbfC family. As to quaternary structure, homodimer.

It is found in the cytoplasm. The protein resides in the nucleoid. In terms of biological role, binds to DNA and alters its conformation. May be involved in regulation of gene expression, nucleoid organization and DNA protection. This chain is Nucleoid-associated protein FMG_0513, found in Finegoldia magna (strain ATCC 29328 / DSM 20472 / WAL 2508) (Peptostreptococcus magnus).